Reading from the N-terminus, the 225-residue chain is Orotate phosphoribosyltransferase (225 aa).

Lys-32 is a 5-phospho-alpha-D-ribose 1-diphosphate binding site. 40 to 41 contributes to the orotate binding site; sequence FF. 5-phospho-alpha-D-ribose 1-diphosphate contacts are provided by residues 78–79, Arg-104, Lys-105, Lys-108, His-110, and 129–137; these read YK and DDVISAGTS. Ser-133 and Arg-161 together coordinate orotate.

Belongs to the purine/pyrimidine phosphoribosyltransferase family. PyrE subfamily. In terms of assembly, homodimer. Mg(2+) is required as a cofactor.

It carries out the reaction orotidine 5'-phosphate + diphosphate = orotate + 5-phospho-alpha-D-ribose 1-diphosphate. It participates in pyrimidine metabolism; UMP biosynthesis via de novo pathway; UMP from orotate: step 1/2. Catalyzes the transfer of a ribosyl phosphate group from 5-phosphoribose 1-diphosphate to orotate, leading to the formation of orotidine monophosphate (OMP). The protein is Orotate phosphoribosyltransferase of Cupriavidus metallidurans (strain ATCC 43123 / DSM 2839 / NBRC 102507 / CH34) (Ralstonia metallidurans).